The sequence spans 399 residues: O-antigen polymerase (399 aa).

10 helical membrane passes run 4 to 24 (FPPG…LVLV), 37 to 57 (LVFT…LTIF), 64 to 84 (AIMG…LVIL), 97 to 117 (IVCY…IDVL), 151 to 171 (GGFS…LLCM), 185 to 205 (IISF…AILV), 222 to 242 (FCGI…TNIF), 309 to 329 (FFWI…IYLA), 353 to 373 (LYFL…APSS), and 374 to 394 (STFS…KLTN).

Its subcellular location is the cell inner membrane. It catalyses the reaction n lipid-linked O-antigen repeat units = a lipid-linked O antigen + (n-1) polyisoprenyl diphosphate.. Its pathway is bacterial outer membrane biogenesis; LPS O-antigen biosynthesis. Functionally, polymerase involved in the biosynthesis of the lipopolysaccharide (LPS). Catalyzes the polymerization of the O-antigen repeat units on the periplasmic face of the inner membrane, leading to the formation of the lipid-linked O-antigen molecule. The polypeptide is O-antigen polymerase (Salmonella muenchen).